A 277-amino-acid polypeptide reads, in one-letter code: Adenylate kinase (277 aa).

72–77 (GAGKGT) contributes to the ATP binding site. Residues 92 to 121 (ATGDMLRSQVAKQTALGVQAKKIMDQGGLV) are NMP. AMP-binding positions include Thr93, Arg98, 119–121 (GLV), 148–151 (GFPR), and Gln155. The interval 189–226 (GRLVHPASGRSYHKLFNPPKVAMTDDVTGDPLVQRSDD) is LID. Residues Arg190 and 199 to 200 (SY) contribute to the ATP site. Positions 223 and 234 each coordinate AMP. ATP is bound at residue Gln262.

It belongs to the adenylate kinase family. AK2 subfamily. In terms of assembly, monomer.

It is found in the cytoplasm. The protein localises to the cytosol. Its subcellular location is the mitochondrion intermembrane space. It catalyses the reaction AMP + ATP = 2 ADP. Catalyzes the reversible transfer of the terminal phosphate group between ATP and AMP. Plays an important role in cellular energy homeostasis and in adenine nucleotide metabolism. Adenylate kinase activity is critical for regulation of the phosphate utilization and the AMP de novo biosynthesis pathways. This chain is Adenylate kinase, found in Eremothecium gossypii (strain ATCC 10895 / CBS 109.51 / FGSC 9923 / NRRL Y-1056) (Yeast).